Consider the following 168-residue polypeptide: MSMTVEQMTKVFRLVMDDVELNRLLYYKTDPLSPSHPDVQSLENYYDSTNDSPAIINTIFKRAPKTDDLSDSPLCRMCIYLGNALPKPTNQSFMLLNQELMIDVYTHINTFEISEYRSLKIIDRVSKLFFNKNIAGFGVTVDYKRLLISNPPDGYLGYKMIFTFGASK.

This is SPbeta prophage-derived uncharacterized protein YomW (yomW) from Bacillus subtilis (strain 168).